The primary structure comprises 366 residues: tRNA/tmRNA (uracil-C(5))-methyltransferase (366 aa).

Gln190, Tyr218, Asn223, Glu239, and Asp299 together coordinate S-adenosyl-L-methionine. Residue Cys324 is the Nucleophile of the active site. Residue Glu358 is the Proton acceptor of the active site.

The protein belongs to the class I-like SAM-binding methyltransferase superfamily. RNA M5U methyltransferase family. TrmA subfamily.

The catalysed reaction is uridine(54) in tRNA + S-adenosyl-L-methionine = 5-methyluridine(54) in tRNA + S-adenosyl-L-homocysteine + H(+). It catalyses the reaction uridine(341) in tmRNA + S-adenosyl-L-methionine = 5-methyluridine(341) in tmRNA + S-adenosyl-L-homocysteine + H(+). In terms of biological role, dual-specificity methyltransferase that catalyzes the formation of 5-methyluridine at position 54 (m5U54) in all tRNAs, and that of position 341 (m5U341) in tmRNA (transfer-mRNA). The protein is tRNA/tmRNA (uracil-C(5))-methyltransferase of Escherichia coli O127:H6 (strain E2348/69 / EPEC).